The sequence spans 99 residues: uncharacterized protein (99 aa).

3 helical membrane passes run 7–29 (FFIS…YTLY), 39–61 (FISS…ARYN), and 68–90 (FCNL…LWLL).

It is found in the cell membrane. This is an uncharacterized protein from Archaeoglobus fulgidus (strain ATCC 49558 / DSM 4304 / JCM 9628 / NBRC 100126 / VC-16).